A 296-amino-acid chain; its full sequence is Glycine and tyrosine-rich protein (296 aa).

The signal sequence occupies residues M1–T18. Residues M157 to N280 are disordered. The span at T172 to G264 shows a compositional bias: low complexity.

In terms of tissue distribution, component of the acid-insoluble and acid-soluble organic matrix of calcified layers of the shell (at protein level).

It localises to the secreted. The sequence is that of Glycine and tyrosine-rich protein from Lottia gigantea (Giant owl limpet).